Here is a 139-residue protein sequence, read N- to C-terminus: MPTVSQLIKKRRTSKTTKTKAPALSYGFNILKKKAQHYASPQKMGVCLRVTTMTPKKPNSALRKFARVRLSNGSEVTAYIPGVGHSLQEHSSVLICGGRVKDLPGVRYHIIRGTLDATGVANRKQGRSRYGAKRPKAQK.

The residue at position 102 (aspartate 102) is a 3-methylthioaspartic acid.

The protein belongs to the universal ribosomal protein uS12 family. Part of the 30S ribosomal subunit. Contacts proteins S8 and S17. May interact with IF1 in the 30S initiation complex.

Functionally, with S4 and S5 plays an important role in translational accuracy. Interacts with and stabilizes bases of the 16S rRNA that are involved in tRNA selection in the A site and with the mRNA backbone. Located at the interface of the 30S and 50S subunits, it traverses the body of the 30S subunit contacting proteins on the other side and probably holding the rRNA structure together. The combined cluster of proteins S8, S12 and S17 appears to hold together the shoulder and platform of the 30S subunit. The polypeptide is Small ribosomal subunit protein uS12 (Phytoplasma australiense).